The following is a 294-amino-acid chain: Nucleotide-binding protein Smal_0950 (294 aa).

16 to 23 (GLSGSGKS) is a binding site for ATP. 69-72 (DVRG) serves as a coordination point for GTP.

The protein belongs to the RapZ-like family.

Its function is as follows. Displays ATPase and GTPase activities. The protein is Nucleotide-binding protein Smal_0950 of Stenotrophomonas maltophilia (strain R551-3).